The primary structure comprises 442 residues: MSDSAGGRAGLRRYPKLPVWVVEDHQEVLPFIYRAIGSKHLPASNVSFLHFDSHPDLLIPVNMPADTVFDKETLFGELSIENWIMPAVYAGHFSHVIWFHPTWAQQIREGRHHFLVGKDTSTTTIRVTSTDHYFLSDGLYVPEDQLENQKPLQLDVIMVKPYKLCNNQEENDAVSSAKKPKLALEDSENTASTNCDSSSEGLEKDTATQRSDQTCLEPSCSCSSENQECQTAASTGEILEILKKGKAFVLDIDLDFFSVKNPFKEMFTQEEYKILQELYQFKKPGTNLTEEDLVDIVDTRIHQLEDLEATFADLCDGDDEETVQRWASNPGMESLVPLVQSLKKRMEVPDYEMVHQAGLTCDYSELPHHISTEQEIECLIQSVHYLLKNLPNPTLVTIARSSLDDYCPSDQVDTIQEKVLNMLRALYGNLDLQVYAAESPPS.

The segment at 175–210 (SSAKKPKLALEDSENTASTNCDSSSEGLEKDTATQR) is disordered. Polar residues predominate over residues 189–200 (NTASTNCDSSSE).

Belongs to the UPF0489 family.

This chain is UPF0489 protein C5orf22 (C5orf22), found in Homo sapiens (Human).